The following is a 642-amino-acid chain: ATP-dependent rRNA helicase spb4 (642 aa).

Residues 14–42 (WDGVTPALSEWVLDAVASMGFTRMTPVQA) carry the Q motif motif. Residues 45–250 (IPLFMAHKDV…RVGLRNPVKV (206 aa)) form the Helicase ATP-binding domain. 58 to 65 (AVTGSGKT) lines the ATP pocket. The DEAD box motif lies at 198-201 (DEAD). Residues 284–438 (AIKHILYSLE…TLTITDADAA (155 aa)) enclose the Helicase C-terminal domain. A coiled-coil region spans residues 522 to 625 (AYKDKQREKR…RLLRRAAKDK (104 aa)). 2 stretches are compositionally biased toward basic and acidic residues: residues 527 to 536 (QREKRRKEQV) and 577 to 628 (AKQA…KESK). The tract at residues 527–642 (QREKRRKEQV…DDDDEFKGFD (116 aa)) is disordered. Positions 632-642 (GDDDDEFKGFD) are enriched in acidic residues.

Belongs to the DEAD box helicase family. DDX55/SPB4 subfamily. As to quaternary structure, component of pre-60S ribosomal complexes.

It localises to the nucleus. Its subcellular location is the nucleolus. It carries out the reaction ATP + H2O = ADP + phosphate + H(+). Functionally, ATP-binding RNA helicase involved in the biogenesis of 60S ribosomal subunits. Binds 90S pre-ribosomal particles and dissociates from pre-60S ribosomal particles after processing of 27SB pre-rRNA. Required for the normal formation of 18S rRNA through the processing of pre-rRNAs at sites A0, A1 and A2, and the normal formation of 25S and 5.8S rRNAs through the processing of pre-rRNAs at sites C1 and C2. This Aspergillus niger (strain ATCC MYA-4892 / CBS 513.88 / FGSC A1513) protein is ATP-dependent rRNA helicase spb4.